Reading from the N-terminus, the 117-residue chain is Large ribosomal subunit protein bL20 (117 aa).

This sequence belongs to the bacterial ribosomal protein bL20 family.

In terms of biological role, binds directly to 23S ribosomal RNA and is necessary for the in vitro assembly process of the 50S ribosomal subunit. It is not involved in the protein synthesizing functions of that subunit. In Photobacterium profundum (strain SS9), this protein is Large ribosomal subunit protein bL20.